We begin with the raw amino-acid sequence, 160 residues long: pH-gated potassium channel KcsA (160 aa).

Topologically, residues 1-27 (MPPMLSGLLARLVKLLLGRHGSALHWR) are cytoplasmic. Residues 28-50 (AAGAATVLLVIVLLAGSYLAVLA) form a helical membrane-spanning segment. The Extracellular portion of the chain corresponds to 51-61 (ERGAPGAQLIT). An intramembrane region (helical; Pore-forming) is located at residues 62-72 (YPRALWWSVET). Residues 73-80 (ATTVGYGD) constitute an intramembrane region (pore-forming). Residues 75–80 (TVGYGD) carry the Selectivity filter motif. Residues 81 to 87 (LYPVTLW) lie on the Extracellular side of the membrane. The chain crosses the membrane as a helical span at residues 88-111 (GRLVAVVVMVAGITSFGLVTAALA). Topologically, residues 112–160 (TWFVGREQERRGHFVRHSEKAAEEAYTRTTRALHERFDRLERMLDDNRR) are cytoplasmic.

The protein belongs to the potassium channel family. In terms of assembly, homotetramer.

The protein resides in the cell membrane. Acts as a pH-gated potassium ion channel; changing the cytosolic pH from 7 to 4 opens the channel. The polypeptide is pH-gated potassium channel KcsA (kcsA) (Streptomyces coelicolor (strain ATCC BAA-471 / A3(2) / M145)).